We begin with the raw amino-acid sequence, 224 residues long: Cytidylate kinase (224 aa).

Position 12–20 (12–20 (GPAGAGKST)) interacts with ATP.

The protein belongs to the cytidylate kinase family. Type 1 subfamily.

Its subcellular location is the cytoplasm. It catalyses the reaction CMP + ATP = CDP + ADP. The catalysed reaction is dCMP + ATP = dCDP + ADP. The polypeptide is Cytidylate kinase (Caldanaerobacter subterraneus subsp. tengcongensis (strain DSM 15242 / JCM 11007 / NBRC 100824 / MB4) (Thermoanaerobacter tengcongensis)).